A 118-amino-acid chain; its full sequence is Large ribosomal subunit protein uL18 (118 aa).

The protein belongs to the universal ribosomal protein uL18 family. In terms of assembly, part of the 50S ribosomal subunit; part of the 5S rRNA/L5/L18/L25 subcomplex. Contacts the 5S and 23S rRNAs.

Functionally, this is one of the proteins that bind and probably mediate the attachment of the 5S RNA into the large ribosomal subunit, where it forms part of the central protuberance. The chain is Large ribosomal subunit protein uL18 from Campylobacter lari (strain RM2100 / D67 / ATCC BAA-1060).